A 362-amino-acid polypeptide reads, in one-letter code: Quinolone epoxide rearrangement protein penF (362 aa).

Residue histidine 220 is part of the active site. Glutamate 222 functions as the Broensted acid in the catalytic mechanism.

The protein belongs to the quinolone epoxide rearrangement protein penF family.

It catalyses the reaction [(1'E)-5'-(3',3'-dimethyloxiran-2'-yl)-3'-hydroxy-3'-methylpent-1'-en-1'-yl]-quinolinone B = yaequinolone D. Its pathway is secondary metabolite biosynthesis. The protein operates within alkaloid biosynthesis. It participates in mycotoxin biosynthesis. Its function is as follows. Quinolone epoxide rearrangement protein; part of the gene cluster that mediates the biosynthesis of penigequinolones, potent insecticidal alkaloids that contain a highly modified 10-carbon prenyl group. The first stage is catalyzed by the nonribosomal peptide synthetase penN that condenses anthranilic acid and O-methyl-L-tyrosine to produce 4'-methoxycyclopeptin. 4'-methoxycyclopeptin is then converted to 4'-methoxydehydrocyclopeptin by the ketoglutarate-dependent dioxygenase penM through dehydrogenation to form a double bond between C-alpha and C-beta of the O-methyltyrosine side chain. PenM also converts its first product methoxydehydrocyclopeptin to 4'-methoxycyclopenin. The following conversion of 4'methoxycyclopenin into 4'-methoxyviridicatin is catalyzed by the cyclopenase penL. 4'-methoxyviridicatin is the precursor of quinolone natural products, and is further converted to quinolinone B. The prenyltransferase penI then catalyzes the canonical Friedel-Crafts alkylation of quinolinone B with dimethylallyl cation to yield dimethylallyl quinolone, which is subjected to FAD-dependent dehydrogenation by the FAD-linked oxidoreductase penH to yield conjugated aryl diene. The delta(3') double bond then serves as the site of the second alkylation with DMAPP catalyzed by the prenyltransferase penG to yield a carbenium ion intermediate, which can be attacked by H(2)O to yield a styrenyl quinolone containing a C3'-hydroxyprenyl chain, or undergo cyclization to yield yaequinolones J1 and J2. The conversion of the styrenyl quinolone into the tetrahydrofuran-containing yaequinolone C is performed by the FAD-dependent monooxygenase penE and involves epoxidation of the terminal C7'-C8' olefin, followed by epoxide ring opening initiated by the C3' hydroxyl group. The predicted cysteine hydrolase penJ acts as an epoxide hydrolase that enhances the rate of the 5-exo-tet cyclization step, increasing the yield of yaequinolone C. PenF catalyzes the cationic rearrangement of the epoxide formed by penE (before ring opening to produce yaequinolone C) into yaequinolone D. Finally, the short-chain dehydrogenase/reductase (SDR)-like reductase penD, catalyzes both the dehydration of yaequinolone D and the reduction of the resulting oxonium to yield penigequinolone. This Penicillium thymicola protein is Quinolone epoxide rearrangement protein penF.